The following is a 181-amino-acid chain: MDDLTAQALKDFTARYCDAWHEEHKSWPLSEELYGVPSPCIISTTEDAVYWQPQPFTGEQNVNAVERAFDIVIQPTIHTFYTTQFAGDMHAQFGDIKLTLLQTWSEDDFRRVQENLIGHLVTQKRLKLPPTLFIATLEEELEVISVCNLSGEVCKETLGTRKRAHLASNLAEFLNQLKPLL.

This sequence belongs to the Syd family.

It is found in the cell inner membrane. Its function is as follows. Interacts with the SecY protein in vivo. May bind preferentially to an uncomplexed state of SecY, thus functioning either as a chelating agent for excess SecY in the cell or as a regulatory factor that negatively controls the translocase function. The protein is Protein Syd of Escherichia coli O17:K52:H18 (strain UMN026 / ExPEC).